Reading from the N-terminus, the 115-residue chain is U3-lycotoxin-Ls1e (115 aa).

A signal peptide spans 1-20 (MKFVLLFGVLSLTLFSYSSA). A propeptide spanning residues 21 to 44 (EMLDDFDQADEDELLSLIEKEEAR) is cleaved from the precursor. Disulfide bonds link cysteine 48/cysteine 63, cysteine 55/cysteine 72, cysteine 62/cysteine 87, and cysteine 74/cysteine 85.

The protein belongs to the neurotoxin 19 (CSTX) family. 01 subfamily. In terms of tissue distribution, expressed by the venom gland.

The protein localises to the secreted. The protein is U3-lycotoxin-Ls1e of Lycosa singoriensis (Wolf spider).